We begin with the raw amino-acid sequence, 456 residues long: 5-hydroxytryptamine receptor 3E (456 aa).

A signal peptide spans 1–25 (MEGSWFHRKRFSFYLLLGFLLQGRG). Residues 26–248 (VTFTINCSGF…FYVAIRRRPS (223 aa)) lie on the Extracellular side of the membrane. C162 and C176 are disulfide-bonded. N-linked (GlcNAc...) asparagine glycosylation occurs at N175. Residues 249 to 269 (LYVINLLVPSGFLVAIDALSF) traverse the membrane as a helical segment. The Cytoplasmic portion of the chain corresponds to 270–282 (YLPVKSGNRVPFK). The helical transmembrane segment at 283-303 (ITLLLGYNVFLLMMSDLLPTS) threads the bilayer. The Extracellular portion of the chain corresponds to 304–307 (GTPL). A helical membrane pass occupies residues 308 to 328 (IGVYFALCLSLMVGSLLETIF). Residues 329-433 (ITHLLHVATT…WLQFSHAMDA (105 aa)) are Cytoplasmic-facing. Positions 401 to 432 (TGGSEWTRAQREHEAQKQHSVELWLQFSHAMD) are HA-stretch; determines single-channel conductance in 5-HT3 receptors. Residues 434-454 (MLFRLYLLFMASSIITVICLW) traverse the membrane as a helical segment. The Extracellular portion of the chain corresponds to 455 to 456 (NT).

Belongs to the ligand-gated ion channel (TC 1.A.9) family. 5-hydroxytryptamine receptor (TC 1.A.9.2) subfamily. HTR3E sub-subfamily. Forms homopentameric as well as heteropentameric serotonin-activated cation-selective channel complexes with HTR3A. The homomeric complex is not functional. Heteropentameric complexes display properties which resemble that of neuronal serotonin-activated channels in vivo. As to expression, expressed in adult colon and intestine.

It localises to the postsynaptic cell membrane. It is found in the cell membrane. It catalyses the reaction Na(+)(in) = Na(+)(out). The enzyme catalyses K(+)(in) = K(+)(out). The catalysed reaction is Ca(2+)(in) = Ca(2+)(out). Functionally, forms serotonin (5-hydroxytryptamine/5-HT3)-activated cation-selective channel complexes, which when activated cause fast, depolarizing responses in neurons. This chain is 5-hydroxytryptamine receptor 3E, found in Homo sapiens (Human).